The following is a 100-amino-acid chain: Small ribosomal subunit protein uS14 (100 aa).

Belongs to the universal ribosomal protein uS14 family. As to quaternary structure, part of the 30S ribosomal subunit. Contacts proteins S3 and S10.

Binds 16S rRNA, required for the assembly of 30S particles and may also be responsible for determining the conformation of the 16S rRNA at the A site. In Synechococcus sp. (strain RCC307), this protein is Small ribosomal subunit protein uS14.